A 163-amino-acid chain; its full sequence is 6,7-dimethyl-8-ribityllumazine synthase (163 aa).

5-amino-6-(D-ribitylamino)uracil is bound by residues F27, 58–60, and 87–89; these read ALE and CVV. 92-93 is a binding site for (2S)-2-hydroxy-3-oxobutyl phosphate; it reads DT. H95 acts as the Proton donor in catalysis. 5-amino-6-(D-ribitylamino)uracil is bound at residue N120. R134 lines the (2S)-2-hydroxy-3-oxobutyl phosphate pocket.

It belongs to the DMRL synthase family.

The enzyme catalyses (2S)-2-hydroxy-3-oxobutyl phosphate + 5-amino-6-(D-ribitylamino)uracil = 6,7-dimethyl-8-(1-D-ribityl)lumazine + phosphate + 2 H2O + H(+). It participates in cofactor biosynthesis; riboflavin biosynthesis; riboflavin from 2-hydroxy-3-oxobutyl phosphate and 5-amino-6-(D-ribitylamino)uracil: step 1/2. Its function is as follows. Catalyzes the formation of 6,7-dimethyl-8-ribityllumazine by condensation of 5-amino-6-(D-ribitylamino)uracil with 3,4-dihydroxy-2-butanone 4-phosphate. This is the penultimate step in the biosynthesis of riboflavin. The protein is 6,7-dimethyl-8-ribityllumazine synthase of Nitrobacter winogradskyi (strain ATCC 25391 / DSM 10237 / CIP 104748 / NCIMB 11846 / Nb-255).